Reading from the N-terminus, the 504-residue chain is UDP-N-acetylmuramoylalanine--D-glutamate ligase (504 aa).

Position 129 to 135 (G129 to T135) interacts with ATP.

The protein belongs to the MurCDEF family.

It localises to the cytoplasm. The catalysed reaction is UDP-N-acetyl-alpha-D-muramoyl-L-alanine + D-glutamate + ATP = UDP-N-acetyl-alpha-D-muramoyl-L-alanyl-D-glutamate + ADP + phosphate + H(+). It functions in the pathway cell wall biogenesis; peptidoglycan biosynthesis. Its function is as follows. Cell wall formation. Catalyzes the addition of glutamate to the nucleotide precursor UDP-N-acetylmuramoyl-L-alanine (UMA). This Burkholderia pseudomallei (strain 668) protein is UDP-N-acetylmuramoylalanine--D-glutamate ligase.